The sequence spans 536 residues: DNA damage-binding protein CMR1 (536 aa).

Basic and acidic residues predominate over residues 36-45; the sequence is REAGVDDTHR. The tract at residues 36-72 is disordered; that stretch reads REAGVDDTHRTVVKKKKSPSVSRGRSASPKVAPVATR. WD repeat units follow at residues 195-236, 251-291, 346-386, 403-442, 456-495, and 496-535; these read LVYE…LSEN, FFTK…SNDI, LSDK…KKPE, DSRL…LPDD, GRWT…LAHL, and PTAT…KEEE.

This sequence belongs to the WD repeat DDB2/WDR76 family.

Functionally, DNA-binding protein that binds to both single- and double-stranded DNA. Binds preferentially to UV-damaged DNA. May be involved in DNA-metabolic processes. In Vanderwaltozyma polyspora (strain ATCC 22028 / DSM 70294 / BCRC 21397 / CBS 2163 / NBRC 10782 / NRRL Y-8283 / UCD 57-17) (Kluyveromyces polysporus), this protein is DNA damage-binding protein CMR1.